The following is a 565-amino-acid chain: Beta-hexosaminidase subunit beta (565 aa).

The signal sequence occupies residues 1–13; the sequence is MIVLLLLISYCFA. N71 carries an N-linked (GlcNAc...) asparagine glycan. E347 functions as the Proton donor in the catalytic mechanism.

This sequence belongs to the glycosyl hydrolase 20 family. In terms of assembly, heterodimer of one alpha subunit and one beta subunit. Glycosylated.

The protein localises to the cytoplasmic granule. The protein resides in the secreted. It carries out the reaction Hydrolysis of terminal non-reducing N-acetyl-D-hexosamine residues in N-acetyl-beta-D-hexosaminides.. Hydrolyzes the non-reducing end N-acetyl-D-hexosamine and/or sulfated N-acetyl-D-hexosamine of glycoconjugates. May contribute to amoebic pathogenicity and may be involved in the destruction of extracellular matrix components. The polypeptide is Beta-hexosaminidase subunit beta (Entamoeba histolytica (strain ATCC 30459 / HM-1:IMSS / ABRM)).